A 334-amino-acid chain; its full sequence is o-succinylbenzoate synthase (334 aa).

The active-site Proton donor is the K107. Mg(2+) contacts are provided by D135, E162, and D185. Catalysis depends on K209, which acts as the Proton acceptor.

This sequence belongs to the mandelate racemase/muconate lactonizing enzyme family. MenC type 1 subfamily. Requires a divalent metal cation as cofactor.

It catalyses the reaction (1R,6R)-6-hydroxy-2-succinyl-cyclohexa-2,4-diene-1-carboxylate = 2-succinylbenzoate + H2O. The protein operates within quinol/quinone metabolism; 1,4-dihydroxy-2-naphthoate biosynthesis; 1,4-dihydroxy-2-naphthoate from chorismate: step 4/7. It participates in quinol/quinone metabolism; menaquinone biosynthesis. Converts 2-succinyl-6-hydroxy-2,4-cyclohexadiene-1-carboxylate (SHCHC) to 2-succinylbenzoate (OSB). In Mycobacterium leprae (strain TN), this protein is o-succinylbenzoate synthase.